The primary structure comprises 155 residues: Riboflavin synthase (155 aa).

The protein belongs to the DMRL synthase family.

The enzyme catalyses 2 6,7-dimethyl-8-(1-D-ribityl)lumazine + H(+) = 5-amino-6-(D-ribitylamino)uracil + riboflavin. Its pathway is cofactor biosynthesis; riboflavin biosynthesis; riboflavin from 2-hydroxy-3-oxobutyl phosphate and 5-amino-6-(D-ribitylamino)uracil: step 2/2. The protein is Riboflavin synthase (ribC) of Aeropyrum pernix (strain ATCC 700893 / DSM 11879 / JCM 9820 / NBRC 100138 / K1).